Here is a 563-residue protein sequence, read N- to C-terminus: Putative cysteine ligase BshC (563 aa).

Residues 493 to 518 (KEKTYRAGRRKHDELLQQLDKAELNL) are a coiled coil.

The protein belongs to the BshC family.

The chain is Putative cysteine ligase BshC from Chlorobaculum tepidum (strain ATCC 49652 / DSM 12025 / NBRC 103806 / TLS) (Chlorobium tepidum).